The following is a 173-amino-acid chain: Thiol-disulfide oxidoreductase ResA (173 aa).

A helical; Signal-anchor for type II membrane protein membrane pass occupies residues 10 to 29; that stretch reads VIILLILCGAVGFTLYQGYF. The region spanning 35–173 is the Thioredoxin domain; that stretch reads MEIGKEAPNF…LEEYLKKITP (139 aa). Residues Cys73 and Cys76 are joined by a disulfide bond.

Belongs to the thioredoxin family. ResA subfamily.

The protein localises to the cell membrane. Its pathway is protein modification; cytochrome c assembly. In terms of biological role, thiol-disulfide oxidoreductase which is required in disulfide reduction during c-type cytochrome synthesis. May accept reducing equivalents from CcdA, leading to breakage of disulfide bonds in apocytochrome c; following this reduction heme can be covalently attached. The chain is Thiol-disulfide oxidoreductase ResA from Bacillus thuringiensis subsp. konkukian (strain 97-27).